The sequence spans 210 residues: Ras-related protein RABC2a (210 aa).

20 to 27 is a binding site for GTP; the sequence is GDSGVGKS. The Effector region motif lies at 41–49; it reads LAPTIGVDF. GTP-binding positions include 67 to 71, 127 to 130, and 157 to 158; these read DTAGQ, NKVD, and SA. Residues cysteine 208 and cysteine 209 are each lipidated (S-geranylgeranyl cysteine).

Belongs to the small GTPase superfamily. Rab family. Interacts with XI-2/MYA2.

It localises to the cell membrane. Its subcellular location is the cytoplasm. Its function is as follows. Intracellular vesicle trafficking and protein transport. The sequence is that of Ras-related protein RABC2a (RABC2A) from Arabidopsis thaliana (Mouse-ear cress).